We begin with the raw amino-acid sequence, 265 residues long: Thiazole synthase (265 aa).

Lys-106 (schiff-base intermediate with DXP) is an active-site residue. 1-deoxy-D-xylulose 5-phosphate-binding positions include Gly-167, Ala-193–Gly-194, and Asn-215–Ser-216.

This sequence belongs to the ThiG family. In terms of assembly, homotetramer. Forms heterodimers with either ThiH or ThiS.

The protein resides in the cytoplasm. It catalyses the reaction [ThiS sulfur-carrier protein]-C-terminal-Gly-aminoethanethioate + 2-iminoacetate + 1-deoxy-D-xylulose 5-phosphate = [ThiS sulfur-carrier protein]-C-terminal Gly-Gly + 2-[(2R,5Z)-2-carboxy-4-methylthiazol-5(2H)-ylidene]ethyl phosphate + 2 H2O + H(+). Its pathway is cofactor biosynthesis; thiamine diphosphate biosynthesis. Functionally, catalyzes the rearrangement of 1-deoxy-D-xylulose 5-phosphate (DXP) to produce the thiazole phosphate moiety of thiamine. Sulfur is provided by the thiocarboxylate moiety of the carrier protein ThiS. In vitro, sulfur can be provided by H(2)S. In Prochlorococcus marinus subsp. pastoris (strain CCMP1986 / NIES-2087 / MED4), this protein is Thiazole synthase.